We begin with the raw amino-acid sequence, 117 residues long: Class I hydrophobin 2 (117 aa).

The N-terminal stretch at 1–21 is a signal peptide; the sequence is EIVSLSLSLLAVVPLVVLVIA. Disulfide bonds link Cys35–Cys96, Cys42–Cys90, Cys43–Cys76, and Cys97–Cys110.

It belongs to the fungal hydrophobin family. As to quaternary structure, self-assembles to form functional amyloid fibrils called rodlets. Self-assembly into fibrillar rodlets occurs spontaneously at hydrophobic:hydrophilic interfaces and the rodlets further associate laterally to form amphipathic monolayers.

It localises to the secreted. The protein resides in the cell wall. Its function is as follows. Aerial growth, conidiation, and dispersal of filamentous fungi in the environment rely upon a capability of their secreting small amphipathic proteins called hydrophobins (HPBs) with low sequence identity. Class I can self-assemble into an outermost layer of rodlet bundles on aerial cell surfaces, conferring cellular hydrophobicity that supports fungal growth, development and dispersal; whereas Class II form highly ordered films at water-air interfaces through intermolecular interactions but contribute nothing to the rodlet structure. The polypeptide is Class I hydrophobin 2 (Pisolithus tinctorius (Dead man's foot)).